We begin with the raw amino-acid sequence, 368 residues long: tRNA N6-adenosine threonylcarbamoyltransferase (368 aa).

2 residues coordinate Fe cation: His-108 and His-112. Substrate contacts are provided by residues 149 to 153 (LVSGG), Asp-183, Gly-196, Asp-200, and Asn-301. A Fe cation-binding site is contributed by Asp-329.

Belongs to the KAE1 / TsaD family. It depends on Fe(2+) as a cofactor.

It is found in the cytoplasm. It catalyses the reaction L-threonylcarbamoyladenylate + adenosine(37) in tRNA = N(6)-L-threonylcarbamoyladenosine(37) in tRNA + AMP + H(+). Its function is as follows. Required for the formation of a threonylcarbamoyl group on adenosine at position 37 (t(6)A37) in tRNAs that read codons beginning with adenine. Is involved in the transfer of the threonylcarbamoyl moiety of threonylcarbamoyl-AMP (TC-AMP) to the N6 group of A37, together with TsaE and TsaB. TsaD likely plays a direct catalytic role in this reaction. The chain is tRNA N6-adenosine threonylcarbamoyltransferase from Paenarthrobacter aurescens (strain TC1).